We begin with the raw amino-acid sequence, 167 residues long: uncharacterized protein (167 aa).

Its subcellular location is the plastid. The protein localises to the chloroplast. This is an uncharacterized protein from Mesostigma viride (Green alga).